A 421-amino-acid polypeptide reads, in one-letter code: Polygalacturonase (421 aa).

The first 20 residues, 1-20, serve as a signal peptide directing secretion; the sequence is MKFSTAIIVSFLFIADFCAA. N-linked (GlcNAc...) asparagine glycosylation is found at N156 and N180. 2 PbH1 repeats span residues 178-204 and 205-226; these read CKNI…HMGK and STDV…SIGD. D219 acts as the Proton donor in catalysis. H242 is a catalytic residue. PbH1 repeat units lie at residues 258 to 279 and 289 to 310; these read VEGI…RIKT and VSDI…IIDQ. N265 carries N-linked (GlcNAc...) asparagine glycosylation. The disordered stretch occupies residues 394-421; the sequence is PGAPAASTTATPAASKTATPAAGKSPAK.

This sequence belongs to the glycosyl hydrolase 28 family. As to expression, pollen specific.

The protein localises to the secreted. The protein resides in the cell wall. It catalyses the reaction (1,4-alpha-D-galacturonosyl)n+m + H2O = (1,4-alpha-D-galacturonosyl)n + (1,4-alpha-D-galacturonosyl)m.. Functionally, may function in the depolymerization of the pectin in its walls during pollen tube elongation, or in that of the pistil during pollination. This Medicago sativa (Alfalfa) protein is Polygalacturonase.